A 157-amino-acid chain; its full sequence is uncharacterized protein (157 aa).

Residues 1-30 (MLPEQGPQPSTMPLWCLLAACTSLPRQAAT) form the signal peptide.

The protein resides in the secreted. This is an uncharacterized protein from Homo sapiens (Human).